Reading from the N-terminus, the 354-residue chain is Muscleblind-like protein 3 (354 aa).

4 consecutive C3H1-type zinc fingers follow at residues 14–42, 48–74, 174–202, and 210–236; these read WLTL…HPPR, NGRV…HPPP, SDKL…HPTD, and DNTV…HPPA.

The protein belongs to the muscleblind family. In terms of tissue distribution, highly expressed in the placenta.

It is found in the nucleus. It localises to the cytoplasm. In terms of biological role, mediates pre-mRNA alternative splicing regulation. Acts either as activator or repressor of splicing on specific pre-mRNA targets. Inhibits cardiac troponin-T (TNNT2) pre-mRNA exon inclusion but induces insulin receptor (IR) pre-mRNA exon inclusion in muscle. Antagonizes the alternative splicing activity pattern of CELF proteins. May play a role in myotonic dystrophy pathophysiology (DM). Could inhibit terminal muscle differentiation, acting at approximately the time of myogenin induction. The protein is Muscleblind-like protein 3 (MBNL3) of Homo sapiens (Human).